A 1374-amino-acid chain; its full sequence is Serine/threonine-protein kinase LMTK1 (1374 aa).

A helical membrane pass occupies residues 32–52; it reads LAVVAVSFSGLFAVIVLMLAC. A Protein kinase domain is found at 125–395; it reads LLYLKEIGRG…PTAEEVHLLL (271 aa). Residues 131-139 and K156 contribute to the ATP site; that span reads IGRGWFGKV. D253 acts as the Proton acceptor in catalysis. S495 is modified (phosphoserine). 5 disordered regions span residues 542-622, 667-731, 765-1195, 1245-1302, and 1320-1374; these read GHDP…LAEG, VGAR…LLGL, WTET…PAVP, QESP…AWDD, and AAPA…SKEA. Low complexity predominate over residues 606 to 620; that stretch reads PSRSPSPSAGPLSLA. A compositionally biased stretch (polar residues) spans 680 to 690; it reads SNVSANNNSGS. 3 stretches are compositionally biased toward low complexity: residues 719 to 731, 801 to 831, and 847 to 856; these read PEPG…LLGL, SPSQ…TPAT, and SSSSPEVEAP. Residues 865–878 show a composition bias toward polar residues; the sequence is EATSGIFTDTSSDG. A compositionally biased stretch (low complexity) spans 900–914; that stretch reads PDSLDSLDIPSSASD. The span at 978–987 shows a compositional bias: polar residues; it reads RLSTSLSGLN. The residue at position 1029 (S1029) is a Phosphoserine. Positions 1063-1073 are enriched in polar residues; that stretch reads EGSSPEPSTCP. Over residues 1138–1155 the composition is skewed to low complexity; sequence TPRAPLRLALPGLPAALE. The segment covering 1158–1173 has biased composition (acidic residues); it reads PEEEEEDSEDSDESDE. Phosphoserine is present on residues S1168, S1171, S1184, S1187, and S1262. Positions 1272–1291 are enriched in polar residues; the sequence is GSPSAPNRPQQADGSPNGST. Residues 1321-1332 show a composition bias toward pro residues; it reads APAPAAPTPTPA. Polar residues predominate over residues 1337–1352; the sequence is FTVSPAPTSRFSITHV. A compositionally biased stretch (basic and acidic residues) spans 1353-1363; that stretch reads SDSDAESKRGP. The span at 1365–1374 shows a compositional bias: gly residues; it reads AGAGGESKEA.

Belongs to the protein kinase superfamily. Tyr protein kinase family. As to quaternary structure, interacts with CDK5. In terms of processing, autophosphorylated. Phosphorylated by CDK5. As to expression, expressed in brain.

The protein resides in the membrane. The protein localises to the cytoplasm. Its subcellular location is the perinuclear region. It carries out the reaction L-seryl-[protein] + ATP = O-phospho-L-seryl-[protein] + ADP + H(+). The catalysed reaction is L-threonyl-[protein] + ATP = O-phospho-L-threonyl-[protein] + ADP + H(+). In terms of biological role, may be involved in neuronal differentiation. This Homo sapiens (Human) protein is Serine/threonine-protein kinase LMTK1 (AATK).